A 148-amino-acid chain; its full sequence is Lysozyme C, milk isozyme (148 aa).

Positions 1–18 (MKALLIVGLLLLSVAVQG) are cleaved as a signal peptide. One can recognise a C-type lysozyme domain in the interval 19–148 (KKFQRCELAR…LRSYVQGCRV (130 aa)). 4 disulfide bridges follow: cysteine 24–cysteine 146, cysteine 48–cysteine 134, cysteine 83–cysteine 99, and cysteine 95–cysteine 113. Catalysis depends on residues glutamate 53 and aspartate 71.

The protein belongs to the glycosyl hydrolase 22 family.

The enzyme catalyses Hydrolysis of (1-&gt;4)-beta-linkages between N-acetylmuramic acid and N-acetyl-D-glucosamine residues in a peptidoglycan and between N-acetyl-D-glucosamine residues in chitodextrins.. Lysozymes have primarily a bacteriolytic function; those in tissues and body fluids are associated with the monocyte-macrophage system and enhance the activity of immunoagents. The polypeptide is Lysozyme C, milk isozyme (Bos taurus (Bovine)).